The chain runs to 191 residues: Protein YceI (191 aa).

Residues methionine 1–alanine 22 form the signal peptide.

It belongs to the UPF0312 family. Type 1 subfamily.

Its subcellular location is the periplasm. The protein is Protein YceI of Escherichia coli O6:H1 (strain CFT073 / ATCC 700928 / UPEC).